The chain runs to 220 residues: Protein US2 homolog (220 aa).

It belongs to the herpesviridae US2 family.

The sequence is that of Protein US2 homolog from Bovine herpesvirus 1.2 (strain ST) (BoHV-1).